A 250-amino-acid polypeptide reads, in one-letter code: 3-deoxy-manno-octulosonate cytidylyltransferase 1 (250 aa).

The protein belongs to the KdsB family.

The protein localises to the cytoplasm. It catalyses the reaction 3-deoxy-alpha-D-manno-oct-2-ulosonate + CTP = CMP-3-deoxy-beta-D-manno-octulosonate + diphosphate. It participates in nucleotide-sugar biosynthesis; CMP-3-deoxy-D-manno-octulosonate biosynthesis; CMP-3-deoxy-D-manno-octulosonate from 3-deoxy-D-manno-octulosonate and CTP: step 1/1. Its pathway is bacterial outer membrane biogenesis; lipopolysaccharide biosynthesis. Activates KDO (a required 8-carbon sugar) for incorporation into bacterial lipopolysaccharide in Gram-negative bacteria. The polypeptide is 3-deoxy-manno-octulosonate cytidylyltransferase 1 (Actinobacillus pleuropneumoniae serotype 5b (strain L20)).